Here is a 395-residue protein sequence, read N- to C-terminus: S-adenosylmethionine synthase (395 aa).

His-16 contacts ATP. Asp-18 is a binding site for Mg(2+). Residue Glu-44 coordinates K(+). The L-methionine site is built by Glu-57 and Gln-100. The segment at Gln-100–Arg-110 is flexible loop. Residues Asp-167–Lys-169, Arg-233–Phe-234, Asp-242, Arg-248–Lys-249, Ala-265, and Lys-269 contribute to the ATP site. L-methionine is bound at residue Asp-242. Lys-273 contacts L-methionine.

Belongs to the AdoMet synthase family. Homotetramer; dimer of dimers. Mg(2+) is required as a cofactor. The cofactor is K(+).

It localises to the cytoplasm. It carries out the reaction L-methionine + ATP + H2O = S-adenosyl-L-methionine + phosphate + diphosphate. Its pathway is amino-acid biosynthesis; S-adenosyl-L-methionine biosynthesis; S-adenosyl-L-methionine from L-methionine: step 1/1. Catalyzes the formation of S-adenosylmethionine (AdoMet) from methionine and ATP. The overall synthetic reaction is composed of two sequential steps, AdoMet formation and the subsequent tripolyphosphate hydrolysis which occurs prior to release of AdoMet from the enzyme. This is S-adenosylmethionine synthase from Paraburkholderia phymatum (strain DSM 17167 / CIP 108236 / LMG 21445 / STM815) (Burkholderia phymatum).